Consider the following 572-residue polypeptide: Outer spore wall assembly protein SHE10 (572 aa).

Positions 1–19 (MRAISKLFVFTVLVLGSLQ) are cleaved as a signal peptide. 2 coiled-coil regions span residues 351 to 372 (SQAN…REVV) and 485 to 510 (FQER…LREQ). A disordered region spans residues 539 to 572 (STSWSVPPADARAEPASGSPIQQAASEAAQQPSV). A compositionally biased stretch (low complexity) spans 560-572 (QQAASEAAQQPSV).

Belongs to the SHE10 family. As to quaternary structure, component of the mitochondria-localized RNase mitochondrial RNA-processing (RNase MRP) composed of one single RNA encoded by the NME1 gene and at least 31 proteins. Absent in the nucleus-localized RNase MRP (NuMRP).

It is found in the mitochondrion. Functionally, involved in spore wall assembly. May be a component of the mitochondrial RNase MRP (MtMRP), a ribonucleoprotein endoribonuclease involved in the cleaving RNA transcripts to generate primers for DNA replication in mitochondria. The protein is Outer spore wall assembly protein SHE10 of Eremothecium gossypii (strain ATCC 10895 / CBS 109.51 / FGSC 9923 / NRRL Y-1056) (Yeast).